The following is a 124-amino-acid chain: UPF0102 protein Haur_0145 (124 aa).

The protein belongs to the UPF0102 family.

This chain is UPF0102 protein Haur_0145, found in Herpetosiphon aurantiacus (strain ATCC 23779 / DSM 785 / 114-95).